The primary structure comprises 71 residues: UPF0337 protein PPA1427 (71 aa).

The tract at residues 20-46 (EKIGGLTDDSDLKSAGADQKASGKVAQ) is disordered.

This sequence belongs to the UPF0337 (CsbD) family.

The polypeptide is UPF0337 protein PPA1427 (Cutibacterium acnes (strain DSM 16379 / KPA171202) (Propionibacterium acnes)).